Here is a 504-residue protein sequence, read N- to C-terminus: Maturase K (504 aa).

It belongs to the intron maturase 2 family. MatK subfamily.

Its subcellular location is the plastid. The protein resides in the chloroplast. Its function is as follows. Usually encoded in the trnK tRNA gene intron. Probably assists in splicing its own and other chloroplast group II introns. This Betula papyrifera (Paper birch) protein is Maturase K.